Consider the following 751-residue polypeptide: Nucleoporin NUP37 (751 aa).

The stretch at 21–65 is one WD 1 repeat; that stretch reads SLGRRIYDVKTYPVQSPQGATILIYGHENGATVVWRGGRRLKPPK. The interval 57–77 is disordered; the sequence is GGRRLKPPKPQTNEKRNGTKP. Over residues 68-77 the composition is skewed to basic and acidic residues; the sequence is TNEKRNGTKP. WD repeat units lie at residues 162-209, 237-271, 282-322, and 351-390; these read TNDV…LTGP, AQAA…KPGT, YLPS…LPSD, and TSRK…PTAA. The tract at residues 419-443 is disordered; that stretch reads EGTSPLRNPTTQKASSSSSGEFVPM. Residues 423 to 438 show a composition bias toward polar residues; it reads PLRNPTTQKASSSSSG. WD repeat units follow at residues 455 to 492 and 494 to 534; these read AFGG…VLFL and GADP…RMIR. The disordered stretch occupies residues 671-692; that stretch reads IPSTDAGDEETIPATSAPSSQQ. Residues 683–692 show a composition bias toward polar residues; that stretch reads PATSAPSSQQ. Residues 716–750 adopt a coiled-coil conformation; the sequence is RDVEQELLDIMEIDRELEQLEQARERGRKRVFFEE.

The nuclear pore complex (NPC) constitutes the exclusive means of nucleocytoplasmic transport. NPCs allow the passive diffusion of ions and small molecules and the active, nuclear transport receptor-mediated bidirectional transport of macromolecules such as proteins, RNAs, ribonucleoparticles (RNPs), and ribosomal subunits across the nuclear envelope. The 55-60 MDa NPC is composed of at least 28 different subunits: AMO1, ELYS, GLE1, GLE2, MLP1, NDC1, NIC96, NSP1, NUP133, NUP145, NUP152, NUP159, NUP170, NUP188, NUP192, NUP37, NUP49, NUP53, NUP56, NUP57, NUP82, NUP84, NUP85, POM152, POM33, POM34, SEC13 and SEH1. Due to its 8-fold rotational symmetry, all subunits are present with 8 copies or multiples thereof.

It localises to the nucleus. The protein localises to the nuclear pore complex. The protein is Nucleoporin NUP37 (NUP37) of Chaetomium thermophilum (strain DSM 1495 / CBS 144.50 / IMI 039719) (Thermochaetoides thermophila).